Reading from the N-terminus, the 91-residue chain is RNA-binding protein Hfq (91 aa).

Residues 9–68 (DPFLNALRRERVPVSIYLVNGIKLQGQVESFDQFVILLKNTVSQMVYKHAISTVVPSRPF) enclose the Sm domain. The segment at 66 to 91 (RPFNVGSHQGGSSNYNAQQDDSAGEQ) is disordered. A compositionally biased stretch (polar residues) spans 71 to 91 (GSHQGGSSNYNAQQDDSAGEQ).

The protein belongs to the Hfq family. Homohexamer.

In terms of biological role, RNA chaperone that binds small regulatory RNA (sRNAs) and mRNAs to facilitate mRNA translational regulation in response to envelope stress, environmental stress and changes in metabolite concentrations. Also binds with high specificity to tRNAs. This is RNA-binding protein Hfq from Shewanella amazonensis (strain ATCC BAA-1098 / SB2B).